Here is a 611-residue protein sequence, read N- to C-terminus: Nuclear cap-binding protein subunit 3 (611 aa).

Positions 1–44 (MAAVRGLRVSVKAGGGAEPEPMEVEEGEVEAAADRASPREVVSG) are disordered. Positions 20–31 (EPMEVEEGEVEA) are enriched in acidic residues. Positions 108–169 (ETLYVYGVDD…LSSMPTNEKG (62 aa)) are RNA recognition motif (RRM) domain. Residues 137–140 (WLDD) carry the WLDD motif; essential for 7-methylguanosine-containing mRNA cap binding motif. Disordered regions lie at residues 159–230 (NLSS…PDTL), 338–360 (EEPI…DDRV), 373–393 (RERE…EMDY), 423–568 (KTIR…DSVL), and 583–611 (RQKK…DTDS). Basic and acidic residues predominate over residues 168-179 (KGQRKKDGEHSS). Acidic residues-rich tracts occupy residues 196–218 (DETE…DETE) and 339–358 (EPIE…DEDD). Residues 423–439 (KTIRNSMRSDSVGNSVK) are compositionally biased toward polar residues. Positions 446-463 (SHAEKPADVRLILEEKRQ) are enriched in basic and acidic residues. The span at 464-475 (STASRQQSSSGK) shows a compositional bias: low complexity. Basic and acidic residues-rich tracts occupy residues 501 to 511 (SRREPLSDVHS) and 544 to 556 (PKDK…KSEK). Residues 602 to 611 (ESSSGSDTDS) are compositionally biased toward low complexity.

The protein belongs to the NCBP3 family. In terms of assembly, component of an alternative cap-binding complex (CBC) composed of NCBP1/CBP80 and NCBP3.

The protein localises to the nucleus. It localises to the cytoplasm. Its function is as follows. Associates with NCBP1/CBP80 to form an alternative cap-binding complex (CBC) which plays a key role in mRNA export. NCBP3 serves as adapter protein linking the capped RNAs (m7GpppG-capped RNA) to NCBP1/CBP80. Unlike the conventional CBC with NCBP2 which binds both small nuclear RNA (snRNA) and messenger (mRNA) and is involved in their export from the nucleus, the alternative CBC with NCBP3 does not bind snRNA and associates only with mRNA thereby playing a role in only mRNA export. The protein is Nuclear cap-binding protein subunit 3 of Xenopus tropicalis (Western clawed frog).